A 246-amino-acid polypeptide reads, in one-letter code: Probable aquaporin AqpM (246 aa).

Residues 1 to 12 (MTMTLAKRFTAE) lie on the Cytoplasmic side of the membrane. The helical transmembrane segment at 13 to 33 (VVGTFILVFFGPGAAVITLMI) threads the bilayer. Over 34–56 (ANGADKPNEFNIGIGALGGLGDW) the chain is Extracellular. Residues 57-77 (FAIGMAFALAIAAVIYSLGRI) form a helical membrane-spanning segment. Residues 78–104 (SGAHINPAVTIALWSIGRFPGREVVPY) lie on the Cytoplasmic side of the membrane. The NPA 1 motif lies at 83–85 (NPA). A helical membrane pass occupies residues 105 to 125 (IVAQFIGAALGSLLFLACVGP). At 126–146 (AAATVGGLGATAPFPGIGYGQ) the chain is on the extracellular side. A helical membrane pass occupies residues 147 to 167 (AILTEAIGTFLLMLVIMGVAV). The Cytoplasmic portion of the chain corresponds to 168–173 (DERAPP). The chain crosses the membrane as a helical span at residues 174–194 (GFAGLVIGLTVGGIITTIGNI). The Extracellular segment spans residues 195 to 217 (TGSSLNPARTFGPYLGDSLMGIN). An NPA 2 motif is present at residues 200–202 (NPA). The helical transmembrane segment at 218-238 (LWQYFPIYVIGPIVGAVAAAW) threads the bilayer. At 239–246 (LYNYLAKE) the chain is on the cytoplasmic side.

It belongs to the MIP/aquaporin (TC 1.A.8) family.

The protein resides in the cell membrane. In terms of biological role, channel that permits osmotically driven movement of water in both directions. The polypeptide is Probable aquaporin AqpM (aqpM) (Archaeoglobus fulgidus (strain ATCC 49558 / DSM 4304 / JCM 9628 / NBRC 100126 / VC-16)).